Reading from the N-terminus, the 186-residue chain is CASP-like protein ARALYDRAFT_316979 (186 aa).

Topologically, residues 1-23 are cytoplasmic; sequence MRRNGDGEEVVAKRRRRIKELVQ. The helical transmembrane segment at 24–44 threads the bilayer; that stretch reads VALRGGCLAASATAMAVMLTA. Residues 45–70 lie on the Extracellular side of the membrane; it reads TEEGVADIYGFKLTLSSNWSFSPSYQ. A glycan (N-linked (GlcNAc...) asparagine) is linked at Asn-62. Residues 71-91 form a helical membrane-spanning segment; the sequence is YVVGACTGTVLYSLFQLCLGV. Over 92-115 the chain is Cytoplasmic; that stretch reads YRLLTGSPITPSRFQAWLCFTSDQ. A helical transmembrane segment spans residues 116 to 132; sequence LFGYLMMSAGSAGSGVT. Topologically, residues 133 to 161 are extracellular; sequence NLNKTGIRHTPLPDFCKTLSSFCNHVALS. Asn-135 carries an N-linked (GlcNAc...) asparagine glycan. The chain crosses the membrane as a helical span at residues 162 to 182; the sequence is LLLVFLSFIFLASSSFFTVLV. Topologically, residues 183–186 are cytoplasmic; the sequence is LSTP.

This sequence belongs to the Casparian strip membrane proteins (CASP) family. As to quaternary structure, homodimer and heterodimers.

It is found in the cell membrane. This is CASP-like protein ARALYDRAFT_316979 from Arabidopsis lyrata subsp. lyrata (Lyre-leaved rock-cress).